Here is a 158-residue protein sequence, read N- to C-terminus: Small ribosomal subunit protein uS9 (158 aa).

Positions 1 to 20 (MTEAVETETVEPTTDEATAA) are disordered. Residues 10–20 (VEPTTDEATAA) show a composition bias toward low complexity.

It belongs to the universal ribosomal protein uS9 family.

This Mycobacterium sp. (strain JLS) protein is Small ribosomal subunit protein uS9.